The primary structure comprises 676 residues: Transketolase 7 (676 aa).

His-36 serves as a coordination point for substrate. Residues His-76 and 125 to 127 contribute to the thiamine diphosphate site; that span reads GPL. Asp-166 contributes to the Mg(2+) binding site. Residues Gly-167 and Asn-196 each coordinate thiamine diphosphate. Positions 196 and 198 each coordinate Mg(2+). Residues His-273, Arg-367, and Ser-394 each coordinate substrate. His-273 provides a ligand contact to thiamine diphosphate. 2 residues coordinate thiamine diphosphate: Glu-421 and Phe-448. Catalysis depends on Glu-421, which acts as the Proton donor. Substrate is bound by residues His-472, Asp-480, and Arg-531.

The protein belongs to the transketolase family. Homodimer. The cofactor is Mg(2+). Ca(2+) is required as a cofactor. Mn(2+) serves as cofactor. Requires Co(2+) as cofactor. It depends on thiamine diphosphate as a cofactor. Leaves and roots.

The catalysed reaction is D-sedoheptulose 7-phosphate + D-glyceraldehyde 3-phosphate = aldehydo-D-ribose 5-phosphate + D-xylulose 5-phosphate. Could be involved in the conversion of sugars, which are a major phenomenon in the rehydration process. Its function is as follows. Catalyzes the transfer of a two-carbon ketol group from a ketose donor to an aldose acceptor, via a covalent intermediate with the cofactor thiamine pyrophosphate. The sequence is that of Transketolase 7 (TKT7) from Craterostigma plantagineum (Blue gem).